The chain runs to 577 residues: MNIQEIISDKVTQALVAAGAPAGSEALVRPSAKVQFGDYQANGIMSAAKKMGLPPRQLAEQVVANLALDGIASKVEIAGPGFINIFLDAAWLAAQADAALADPRLGVARVEPQTIVVDYSAPNVAKEMHVGHLRSTIIGDAAVRTLEFLGHNVIRANHVGDWGTQFGMLIAYLEKVQGSSETGDMALADLEAFYREAKKHYDEDAAFAERARGYVVKLQGGDEYCREMWRKLVDITMRQNQRNYDRLNVTLTDDDVMGESLYNPMLPGIVADLKAKGLATESEGATVVFLNEFRNKEGEPMGVIVQKKDGGYLYTTTDIACAKYRYETLGANRILYYIDSRQHQHLMQAWTIVRKAGYVPDSVSLEHHMFGMMLGKDGKPFKTRAGGTIKLADLLDEAIERAAKLIAAKNPELSGDELKALVEVVGIGAVKYADLSKNRTTDYIFDWDNMLAFEGNTAPYMQYAYTRVASIFKRAGIDENTLQGAITLTEEREKALATRLMQFEETILSVAREGTPHVMCAYLYEVAGLFSSFYEACPILNAEEESVRASRLKLAALTARTLKTGLDTLGIKTVERM.

Positions 122-132 (PNVAKEMHVGH) match the 'HIGH' region motif.

The protein belongs to the class-I aminoacyl-tRNA synthetase family. In terms of assembly, monomer.

The protein localises to the cytoplasm. It catalyses the reaction tRNA(Arg) + L-arginine + ATP = L-arginyl-tRNA(Arg) + AMP + diphosphate. This is Arginine--tRNA ligase from Edwardsiella ictaluri (strain 93-146).